A 230-amino-acid polypeptide reads, in one-letter code: UPF0502 protein Oter_3715 (230 aa).

Belongs to the UPF0502 family.

The polypeptide is UPF0502 protein Oter_3715 (Opitutus terrae (strain DSM 11246 / JCM 15787 / PB90-1)).